The chain runs to 211 residues: MLSYYFQGLVLGAAMILPLGPQNAFVMNQGIRRQYHLMIAMLCAVSDLLLICAGIFGGSALLMQSPWLLALVTWGGVAFLLWYGFGALKTAMGSNLELATAEVMKQGRWKIIATMLAVTWLNPHVYLDTFVVLGSLGGQLDVEPRRWFALGTVSASFLWFFGLALLAAWLAPRLRTAKAQRVINTLVGLVMWFIAFQLAKEGIHHIQGLLN.

The next 6 helical transmembrane spans lie at 1 to 21 (MLSY…PLGP), 37 to 57 (LMIA…GIFG), 68 to 88 (LLAL…FGAL), 111 to 131 (IIAT…DTFV), 147 to 167 (WFAL…ALLA), and 186 to 206 (LVGL…IHHI).

This sequence belongs to the LysE/ArgO transporter (TC 2.A.75) family.

Its subcellular location is the cell inner membrane. It carries out the reaction L-arginine(in) = L-arginine(out). Its function is as follows. Involved in the export of arginine. Important to control the intracellular level of arginine and the correct balance between arginine and lysine. This is Arginine exporter protein ArgO from Enterobacter sp. (strain 638).